The primary structure comprises 147 residues: Hemoglobin subunit beta-H0 (147 aa).

Residues 3 to 147 (HFTAEEKAAI…VATALSHKYH (145 aa)) form the Globin domain. Positions 64 and 93 each coordinate heme b.

The protein belongs to the globin family. In terms of assembly, heterotetramer of two alpha chains and two beta chains. Red blood cells.

This is a minor early embryonic beta chain. The polypeptide is Hemoglobin subunit beta-H0 (Hbb-bh0) (Mus musculus (Mouse)).